A 277-amino-acid polypeptide reads, in one-letter code: Movement protein (277 aa).

This sequence belongs to the cucumovirus movement protein family.

It is found in the host cell junction. The protein localises to the host plasmodesma. Functionally, transports viral genome to neighboring plant cells directly through plasmosdesmata, without any budding. The movement protein allows efficient cell to cell propagation, by bypassing the host cell wall barrier. Acts by forming a tubular structure at the host plasmodesmata, enlarging it enough to allow free passage of virion capsids. The chain is Movement protein from Canna (Florist's daisy).